The primary structure comprises 444 residues: MTKTYYFIGIKGTGMGPLAQILHDQGNTVLGSDIDSYTYTQAPLEAAGIKILPFSADNVDRYADAIFVRGNAFNDDHVEVQRALTLGVKMISYPDAVQEQIAQTTSIAVAGAHGKTSTTGLLAHVVKNIAPTSYLIGDGTGRGVPNSQFFVVEADEYRRHFKDYAPDYAILTNIDFDHPDYYEDINDVTRAFSDFANHVKKDIFAWGDDPYLRLLQPKADVYYYGTNSEQDDFVATNIRKSTQGSHFDVVFRGQSLGEFSVPLFGQHSILNALSVIAVAYMEKMDLSLIKSFLMTYQGVKRRFSEKQIADITVIDDYAHHPTEIDATLDAARQKYPNKQIIAIFQPHTYSRVIAYKDEFAKSLEAADKVYLANIFGSAREKQGAVTSAEIGAEISKFGGIIEEDNMSLLMPYENAVMVFMGAGDIEKYEFAYEKLLGQLRTDLQ.

An ATP-binding site is contributed by Gly111–Ser117.

It belongs to the MurCDEF family.

It is found in the cytoplasm. The catalysed reaction is UDP-N-acetyl-alpha-D-muramate + L-alanine + ATP = UDP-N-acetyl-alpha-D-muramoyl-L-alanine + ADP + phosphate + H(+). It functions in the pathway cell wall biogenesis; peptidoglycan biosynthesis. Its function is as follows. Cell wall formation. The polypeptide is UDP-N-acetylmuramate--L-alanine ligase (Leuconostoc citreum (strain KM20)).